The primary structure comprises 94 residues: Ammonia regulation of amino acid uptake protein (94 aa).

2 consecutive repeats follow at residues 48–57 (HHQIRRRTHQ) and 58–67 (HHQIRRRTHQ).

In terms of biological role, involved in ammonia regulation of the GAP1 permease. In Saccharomyces cerevisiae (strain ATCC 204508 / S288c) (Baker's yeast), this protein is Ammonia regulation of amino acid uptake protein (AUA1).